We begin with the raw amino-acid sequence, 34 residues long: ECRWFLGGCSGGQTCCEHLVCHRKHQWCVWDWSF.

Disulfide bonds link Cys-2/Cys-16, Cys-9/Cys-21, and Cys-15/Cys-28. Residue Phe-34 is modified to Phenylalanine amide.

This sequence belongs to the neurotoxin 10 (Hwtx-1) family. 54 (ProTx-1) subfamily. C-terminal amidation is important for the high potency of the toxin. As to expression, expressed by the venom gland.

It is found in the secreted. In terms of biological role, inhibits sodium channel Nav1.7/SCN9A with high potency (IC(50)=117 nM) and Nav1.2/SCN2A, Nav1.3/SCN3A, Nav1.6/SCN8A and Nav1.5/SCN5 with weaker potency. Also inhibits voltage-gated calcium channel Cav3.1/CACNA1G, Cav3.2/CACNA1H and Cav3.3/CACNA1I. The protein is Mu-theraphotoxin-Df1a of Davus fasciatus (Costa Rican tiger rump).